Consider the following 266-residue polypeptide: Enterotoxin type C-1 (266 aa).

The N-terminal stretch at 1 to 27 (MNKSRFISCVILIFALILVLFTPNVLA) is a signal peptide. A disulfide bridge links C120 with C137.

Belongs to the staphylococcal/streptococcal toxin family. Interacts with host MHC class II molecules composed of alpha/HLA-DRA and beta/HLA-DRB1 chains.

It is found in the secreted. In terms of biological role, staphylococcal enterotoxin that activates the host immune system by binding as unprocessed molecules to major histocompatibility (MHC) complex class II and T-cell receptor (TCR) molecules. In turn, this ternary complex activates a large number of T-lymphocytes initiating a systemic release of pro-inflammatory cytokines. Inhibits SEC1-mediated T-cell activation in the absence of MHC class II by competing with SEC1 for binding to the host TCR. Also causes the intoxication staphylococcal food poisoning syndrome. In Staphylococcus aureus, this protein is Enterotoxin type C-1 (entC1).